Here is a 902-residue protein sequence, read N- to C-terminus: Glycogen phosphorylase (902 aa).

Residues 1 to 21 (MPPASTSTTNDMITEEPTSPH) form a disordered region. T31 is modified (phosphothreonine). The residue at position 333 (S333) is a Phosphoserine. The residue at position 751 (K751) is an N6-(pyridoxal phosphate)lysine.

This sequence belongs to the glycogen phosphorylase family. Homodimer. Pyridoxal 5'-phosphate serves as cofactor.

The protein resides in the cytoplasm. It localises to the cytosol. The enzyme catalyses [(1-&gt;4)-alpha-D-glucosyl](n) + phosphate = [(1-&gt;4)-alpha-D-glucosyl](n-1) + alpha-D-glucose 1-phosphate. Activated by phosphorylation of Thr-31. Functionally, phosphorylase is an important allosteric enzyme in carbohydrate metabolism. Enzymes from different sources differ in their regulatory mechanisms and in their natural substrates. However, all known phosphorylases share catalytic and structural properties. The protein is Glycogen phosphorylase (GPH1) of Saccharomyces cerevisiae (strain ATCC 204508 / S288c) (Baker's yeast).